The sequence spans 77 residues: Acyl carrier protein (77 aa).

The 76-residue stretch at 2 to 77 (ADTLERVTKI…DAVNYIQNQQ (76 aa)) folds into the Carrier domain. At serine 37 the chain carries O-(pantetheine 4'-phosphoryl)serine.

This sequence belongs to the acyl carrier protein (ACP) family. 4'-phosphopantetheine is transferred from CoA to a specific serine of apo-ACP by AcpS. This modification is essential for activity because fatty acids are bound in thioester linkage to the sulfhydryl of the prosthetic group.

It is found in the cytoplasm. It participates in lipid metabolism; fatty acid biosynthesis. Its function is as follows. Carrier of the growing fatty acid chain in fatty acid biosynthesis. The chain is Acyl carrier protein (acpA) from Bacillus subtilis (strain 168).